The sequence spans 351 residues: 5-deoxyribose 1-phosphate isomerase (351 aa).

Residues 48-50 (RGA), Arg-91, and Gln-198 each bind substrate. Asp-239 acts as the Proton donor in catalysis. 249-250 (NK) lines the substrate pocket.

The protein belongs to the EIF-2B alpha/beta/delta subunits family. DrdI subfamily.

It carries out the reaction 5-deoxy-alpha-D-ribose 1-phosphate = 5-deoxy-D-ribulose 1-phosphate. Its pathway is carbohydrate degradation. In terms of biological role, catalyzes the isomerization of 5-deoxy-alpha-D-ribose 1-phosphate to 5-deoxy-D-ribulose 1-phosphate, as part of a 5-deoxyribose salvage pathway that recycles this toxic radical SAM enzyme by-product to mainstream metabolites. This chain is 5-deoxyribose 1-phosphate isomerase, found in Moorella thermoacetica (strain ATCC 39073 / JCM 9320).